Reading from the N-terminus, the 530-residue chain is MSGKIDKILIVGGGTAGWMAASYLGKALQGTADITLLQAPDIPTLGVGEATIPNLQTAFFDFLGIPEDEWMRECNASYKVAIKFINWRTAGEGTSEARELDGGPDHFYHSFGLLKYHEQIPLSHYWFDRSYRGKTVEPFDYACYKEPVILDANRSPRRLDGSKVTNYAWHFDAHLVADFLRRFATEKLGVRHVEDRVEHVQRDANGNIESVRTATGRVFDADLFVDCSGFRGLLINKAMEEPFLDMSDHLLNDSAVATQVPHDDDANGVEPFTSAIAMKSGWTWKIPMLGRFGTGYVYSSRFATEDEAVREFCEMWHLDPETQPLNRIRFRVGRNRRAWVGNCVSIGTSSCFVEPLESTGIYFVYAALYQLVKHFPDKSLNPVLTARFNREIETMFDDTRDFIQAHFYFSPRTDTPFWRANKELRLADGMQEKIDMYRAGMAINAPASDDAQLYYGNFEEEFRNFWNNSNYYCVLAGLGLVPDAPSPRLAHMPQATESVDEVFGAVKDRQRNLLETLPSLHEFLRQQHGR.

FAD-binding residues include Gly-13, Thr-15, Ala-16, Ala-39, Asp-41, Glu-49, and Ala-50. The active site involves Lys-79. 2 residues coordinate FAD: Val-197 and Thr-348. Glu-357 contributes to the L-tryptophan binding site. The chloride site is built by Thr-359 and Gly-360. An FAD-binding site is contributed by Ile-361. Residues Tyr-454, Tyr-455, Glu-461, and Phe-465 each coordinate L-tryptophan.

This sequence belongs to the flavin-dependent halogenase family. Bacterial tryptophan halogenase subfamily. Homodimer.

It carries out the reaction L-tryptophan + FADH2 + chloride + O2 = 7-chloro-L-tryptophan + FAD + 2 H2O. Functionally, involved in the biosynthesis of the indolocarbazole antitumor agent rebeccamycin. Catalyzes the chlorination of tryptophan (Trp) at C7 position to yield 7-chlorotryptophan. It is also able to use bromide ions to generate monobrominated Trp. The polypeptide is Tryptophan 7-halogenase RebH (rebH) (Lentzea aerocolonigenes (Lechevalieria aerocolonigenes)).